We begin with the raw amino-acid sequence, 344 residues long: Nuclear distribution protein nudE-like 1-B (344 aa).

Residues 13–190 adopt a coiled-coil conformation; sequence KEEIVYWREL…LAVRERQTDG (178 aa). Disordered regions lie at residues 186–209 and 325–344; these read RQTD…TDSS and PPGV…PLSV. Positions 333 to 344 are enriched in pro residues; the sequence is PPSPPGLLPLSV.

It belongs to the nudE family. In terms of processing, phosphorylated in mitosis.

The protein localises to the cytoplasm. Its subcellular location is the cytoskeleton. It is found in the microtubule organizing center. It localises to the centrosome. The protein resides in the spindle. Functionally, required for organization of the cellular microtubule array and microtubule anchoring at the centrosome. Positively regulates the activity of the minus-end directed microtubule motor protein dynein. May enhance dynein-mediated microtubule sliding by targeting dynein to the microtubule plus end. Positively regulates lysosome peripheral distribution and ruffled border formation in osteoclasts. This chain is Nuclear distribution protein nudE-like 1-B (ndel1-b), found in Xenopus laevis (African clawed frog).